The chain runs to 304 residues: Methionyl-tRNA formyltransferase (304 aa).

Residue 106 to 109 (SLLP) participates in (6S)-5,6,7,8-tetrahydrofolate binding.

Belongs to the Fmt family.

The catalysed reaction is L-methionyl-tRNA(fMet) + (6R)-10-formyltetrahydrofolate = N-formyl-L-methionyl-tRNA(fMet) + (6S)-5,6,7,8-tetrahydrofolate + H(+). Its function is as follows. Attaches a formyl group to the free amino group of methionyl-tRNA(fMet). The formyl group appears to play a dual role in the initiator identity of N-formylmethionyl-tRNA by promoting its recognition by IF2 and preventing the misappropriation of this tRNA by the elongation apparatus. This is Methionyl-tRNA formyltransferase from Thermosipho africanus (strain TCF52B).